The sequence spans 1030 residues: Probable serine/threonine-protein kinase SIS8 (1030 aa).

Polar residues-rich tracts occupy residues 44 to 58 (PNQSDEAEGSISTTK) and 399 to 419 (YSASPGDNDSIHVASSSNGIE). Disordered regions lie at residues 44 to 84 (PNQS…PEIK), 399 to 474 (YSAS…KAPF), 555 to 625 (TVES…ASST), and 689 to 736 (LGSN…SDCD). 3 stretches are compositionally biased toward basic and acidic residues: residues 426–435 (TEFRTGEHRS), 458–471 (ISREDVKNQKKVEK), and 560–580 (NSTEAKKERGKDLETTQEGRH). Residues 613–625 (SQSDSSHSEASST) are compositionally biased toward low complexity. In terms of domain architecture, Protein kinase spans 748-1003 (ITVGERIGLG…AEIMASLKRL (256 aa)). ATP is bound by residues 754-762 (IGLGSYGEV) and Lys-775. Catalysis depends on Asp-871, which acts as the Proton acceptor. Positions 1007-1023 (VTGSNIPRPVPSSSSLP) are enriched in polar residues. The disordered stretch occupies residues 1007–1030 (VTGSNIPRPVPSSSSLPTEHEQKD).

It belongs to the protein kinase superfamily. Ser/Thr protein kinase family. In terms of assembly, interacts with UGT72E1. Expressed roots, rosette and cauline leaves, and at lower levels in flowers and siliques.

Its subcellular location is the nucleus. The enzyme catalyses L-seryl-[protein] + ATP = O-phospho-L-seryl-[protein] + ADP + H(+). It catalyses the reaction L-threonyl-[protein] + ATP = O-phospho-L-threonyl-[protein] + ADP + H(+). Its function is as follows. Acts as a negative regulator of salt tolerance. Mediates sugar response during early seedling development. This Arabidopsis thaliana (Mouse-ear cress) protein is Probable serine/threonine-protein kinase SIS8.